We begin with the raw amino-acid sequence, 95 residues long: MRKYELLYIIRPSVDEEAKKALIERFNNVITENGGTVEKTTDMGKRRFAYEINKMREGHYVLLNIVAEPKAILETERLMKISDDVVRQMTTKDER.

It belongs to the bacterial ribosomal protein bS6 family.

Binds together with bS18 to 16S ribosomal RNA. In Exiguobacterium sp. (strain ATCC BAA-1283 / AT1b), this protein is Small ribosomal subunit protein bS6.